A 79-amino-acid chain; its full sequence is Cytochrome c oxidase subunit 7A1, mitochondrial (79 aa).

The transit peptide at Met1–Arg21 directs the protein to the mitochondrion. Over Phe22 to Gly46 the chain is Mitochondrial matrix. The chain crosses the membrane as a helical span at residues Ile47–Ser75. Residues Phe76 to Asn79 are Mitochondrial intermembrane-facing.

Belongs to the cytochrome c oxidase VIIa family. Component of the complex IV (CIV, cytochrome c oxidase), a multisubunit enzyme composed of 14 subunits. The complex is composed of a catalytic core of 3 subunits MT-CO1, MT-CO2 and MT-CO3, encoded in the mitochondrial DNA, and 11 supernumerary subunits COX4I1 (or COX4I2), COX5A, COX5B, COX6A2 (or COX6A1), COX6B1 (or COX6B2), COX6C, COX7A1 (or COX7A2), COX7B, COX7C, COX8B and NDUFA4, which are encoded in the nuclear genome. The complex exists as a monomer or a dimer and forms supercomplexes (SCs) in the inner mitochondrial membrane with NADH-ubiquinone oxidoreductase (complex I, CI) and ubiquinol-cytochrome c oxidoreductase (cytochrome b-c1 complex, complex III, CIII), resulting in different assemblies (supercomplex SCI(1)III(2)IV(1) and megacomplex MCI(2)III(2)IV(2)).

Its subcellular location is the mitochondrion inner membrane. It functions in the pathway energy metabolism; oxidative phosphorylation. Component of the mitochondrial respiratory complex IV (CIV, also named cytochrome c oxidase complex), the last enzyme in the mitochondrial electron transport chain which drives oxidative phosphorylation. The CIV complex is the component of the respiratory chain that catalyzes the reduction of oxygen to water. Acts as an assembly factor that specifically drives the homodimerization of CIV complexes, mediating the formation of mitochondrial respiratory supercomplexes (respirasomes) containing two CIV: supercomplxes with two molecules of CIV show improved activity. Despite being highly expressed in brown adipose tissue, not required for thermogenesis. The polypeptide is Cytochrome c oxidase subunit 7A1, mitochondrial (COX7A1) (Trachypithecus cristatus (Silvered leaf-monkey)).